The following is a 355-amino-acid chain: F-box only protein 32 (355 aa).

The short motif at K62 to D67 is the Nuclear localization signal element. A Nuclear export signal motif is present at residues L169–L173. In terms of domain architecture, F-box spans L223–Q271. The short motif at R280 to K295 is the Bipartite nuclear localization signal element.

As to quaternary structure, part of the SCF (SKP1-CUL1-F-box) E3 ubiquitin-protein ligase complex SCF(FBXO32) formed of CUL1, SKP1, RBX1 and FBXO32. Specifically expressed in cardiac and skeletal muscle.

The protein localises to the cytoplasm. It localises to the nucleus. Its pathway is protein modification; protein ubiquitination. In terms of biological role, substrate recognition component of a SCF (SKP1-CUL1-F-box protein) E3 ubiquitin-protein ligase complex which mediates the ubiquitination and subsequent proteasomal degradation of target proteins. Probably recognizes and binds to phosphorylated target proteins during skeletal muscle atrophy. Recognizes TERF1. This is F-box only protein 32 (FBXO32) from Homo sapiens (Human).